A 1067-amino-acid chain; its full sequence is MTDQENNNNISSNPFAALFGSLADAKQFAAIQKEQLKQQSDELPASPDDSDNSVSESLDEFDYSVAEISRSFRSQQEICEQLNINHMIQRIFLITLDNSDPSLKSGNGIPSRCVYLEEMAVDLEDQDWLDMNNVEQAVFTRLLLQDPGNHLINMTSSTTLNLSADRDAGEKHIFCYLYSCFQRAKEEITKVPENLLPFAVQCRNLTVSNTRTVLLTPEIYVDQNIHEQLVDLMVEAILGGHFESVAEFLDEVIEALILDEEVRTFPEVMIPVFDILSSRIKDLELCQILLYAYLDILLYFTKQKDMAKVFVDYIQPKDPSNGQMYQKTLLGVILNISCLLKTPGVIENHGYFLNPSRSSPQEIKVQEANIHQFMARYHEKIYQMLKNLLQLSPETKHCILSWLGNCLHANAGRTKIWANQMPEIFFQMYASDAFFLNLGAALLKLCQPFCKPRSSRLLTFNPTYCALKELNDEERKIKNVHMRGLDKETCLIPAVQEPKFPQNYNLVTENLVLTEYTLYLGFHRLHDQMVKINQNLHRLQVAWRDAQQSSSPAADNLREQFERLMTVYLSTKTAMTEPQMLQNCLNLQVSMAVLLVQLAIGNEGSQLMELTFPLPDGYSSLAYVPEFFADNLGDFLIFLRRFADDILETSADSLEHVLHFITIFTGSIERMKNPHLRAKLAEVLEAVMPHMDQTPNPLVSSVFHRKRVFCNFPYASHLAEALIKVFVDIEFTGDPHQFEQKFNYRRPMYPILKYMWGTDTYRESIKDLADYASKNLEAMNPPLFLRFLNLLMNDAIFLLDEAIQYLSKIKIQQIEKDRGEWDNLTPEARREKEAGLQMFGQLARFHNIMSNETIGTLAFLTSEIKSLFVHPFLAERIISMLNYFLQHLVGPKMGALKVKDFSEFDFKPQQLVSDICTIYLNLGDEENFCATVPKDGRSYSPTLFAQTVRVLKKINKPGNMIVAFSNLAERIKSLADLQQQEEETYADACDEFLDPIMSTLMSDPVVLPSSRVTVDRSTIARHLLSDQTDPFNRSPLTMDQIRPNTELKEKIQRWLAERKQQQKEQLE.

The disordered stretch occupies residues 33 to 57 (KEQLKQQSDELPASPDDSDNSVSES). N6-acetyllysine is present on K386. The U-box domain maps to 987-1061 (DACDEFLDPI…QRWLAERKQQ (75 aa)).

It belongs to the ubiquitin conjugation factor E4 family.

It is found in the cytoplasm. The catalysed reaction is S-ubiquitinyl-[E2 ubiquitin-conjugating enzyme]-L-cysteine + [acceptor protein]-L-lysine = [E2 ubiquitin-conjugating enzyme]-L-cysteine + N(6)-ubiquitinyl-[acceptor protein]-L-lysine.. The protein operates within protein modification; protein ubiquitination. Functionally, ubiquitin-protein ligase that probably functions as an E3 ligase in conjunction with specific E1 and E2 ligases. May also function as an E4 ligase mediating the assembly of polyubiquitin chains on substrates ubiquitinated by another E3 ubiquitin ligase. Mediates 'Lys-48'-linked polyubiquitination of substrates. In Bos taurus (Bovine), this protein is Ubiquitin conjugation factor E4 A.